The following is an 88-amino-acid chain: HssA/B-like protein 9 (88 aa).

Over residues 1 to 14 (MSILSALTSISNPM) the composition is skewed to polar residues. A disordered region spans residues 1-26 (MSILSALTSISNPMKSSKSSVANGGG).

This sequence belongs to the hssA/B family.

This is HssA/B-like protein 9 (hssl9) from Dictyostelium discoideum (Social amoeba).